We begin with the raw amino-acid sequence, 409 residues long: Dual-specificity RNA methyltransferase RlmN (409 aa).

The Proton acceptor role is filled by Glu-126. The Radical SAM core domain occupies 132–373 (EEGRGTLCLS…NQAGYASPIR (242 aa)). A disulfide bond links Cys-139 and Cys-384. Positions 146, 150, and 153 each coordinate [4Fe-4S] cluster. Residues 210–211 (GE), Ser-242, 264–266 (SLH), and Asn-341 each bind S-adenosyl-L-methionine. Cys-384 serves as the catalytic S-methylcysteine intermediate.

Belongs to the radical SAM superfamily. RlmN family. The cofactor is [4Fe-4S] cluster.

It is found in the cytoplasm. It carries out the reaction adenosine(2503) in 23S rRNA + 2 reduced [2Fe-2S]-[ferredoxin] + 2 S-adenosyl-L-methionine = 2-methyladenosine(2503) in 23S rRNA + 5'-deoxyadenosine + L-methionine + 2 oxidized [2Fe-2S]-[ferredoxin] + S-adenosyl-L-homocysteine. The enzyme catalyses adenosine(37) in tRNA + 2 reduced [2Fe-2S]-[ferredoxin] + 2 S-adenosyl-L-methionine = 2-methyladenosine(37) in tRNA + 5'-deoxyadenosine + L-methionine + 2 oxidized [2Fe-2S]-[ferredoxin] + S-adenosyl-L-homocysteine. Functionally, specifically methylates position 2 of adenine 2503 in 23S rRNA and position 2 of adenine 37 in tRNAs. m2A2503 modification seems to play a crucial role in the proofreading step occurring at the peptidyl transferase center and thus would serve to optimize ribosomal fidelity. This is Dual-specificity RNA methyltransferase RlmN from Bartonella quintana (strain Toulouse) (Rochalimaea quintana).